A 427-amino-acid chain; its full sequence is Putative dipeptidase MCYG_02918 (427 aa).

The N-terminal stretch at 1-29 (MAPERRSRLSDAGILVSLLALTSLVPVQA) is a signal peptide. H55, D57, and E167 together coordinate Zn(2+). C106 and C196 form a disulfide bridge. Residue H194 coordinates substrate. Positions 238 and 259 each coordinate Zn(2+). 2 residues coordinate substrate: R270 and D330. N-linked (GlcNAc...) asparagine glycosylation is present at N402.

It belongs to the metallo-dependent hydrolases superfamily. Peptidase M19 family. Zn(2+) serves as cofactor.

The catalysed reaction is an L-aminoacyl-L-amino acid + H2O = 2 an L-alpha-amino acid. Hydrolyzes a wide range of dipeptides. The protein is Putative dipeptidase MCYG_02918 of Arthroderma otae (strain ATCC MYA-4605 / CBS 113480) (Microsporum canis).